We begin with the raw amino-acid sequence, 449 residues long: MNNIHAIILAAGKGTRMNSTKPKVLQILSNNTLLEHVLSQVKTLCNKIHIAYGFEGKQVQQKINNPSINWVKQVKQLGTGHAVAQVMPYIEGNSISLILYGDVPLIKRSTLYDLINKTQQSGIALLSVILNNPTGYGRIIRNNKQIQAIVEQKDASNMQLNINEVNTGIMAINSQLLKQYLNEIDSRNTQGELYLTDIIACAAADKKTISSIISKNKFEVLGVNDKVQLAELERLFQKDQAIQFMKQGLGLKDPTRFDCRGTLTFGQNCEIDVNTLIKGKVALGNSTTIEPNCIIKNTIIGNHVSIFPNCVIEDAVIGEGVTIGPFVHIRPQTHIQTHAKIGNFVEIKKSTIGKNTKISHLSYVGDSTIGKNVNIGAGVITCNYDGVNKHQTIIADGAFIGSDSQLIAPIKIGKNAKIGAGSTITKSVSENQLSVSRTKQKNLKYRSKK.

The segment at 1-226 (MNNIHAIILA…KFEVLGVNDK (226 aa)) is pyrophosphorylase. UDP-N-acetyl-alpha-D-glucosamine-binding positions include 9 to 12 (LAAG), Lys-23, Gln-73, 78 to 79 (GT), 100 to 102 (YGD), Gly-137, Glu-151, Asn-166, and Asn-224. Residue Asp-102 participates in Mg(2+) binding. A Mg(2+)-binding site is contributed by Asn-224. The linker stretch occupies residues 227 to 247 (VQLAELERLFQKDQAIQFMKQ). The interval 248–449 (GLGLKDPTRF…QKNLKYRSKK (202 aa)) is N-acetyltransferase. UDP-N-acetyl-alpha-D-glucosamine contacts are provided by Arg-330 and Lys-348. His-360 (proton acceptor) is an active-site residue. The UDP-N-acetyl-alpha-D-glucosamine site is built by Tyr-363 and Asn-374. Residues Ala-377, 383–384 (NY), Ser-402, Ala-420, and Arg-437 contribute to the acetyl-CoA site.

It in the N-terminal section; belongs to the N-acetylglucosamine-1-phosphate uridyltransferase family. In the C-terminal section; belongs to the transferase hexapeptide repeat family. In terms of assembly, homotrimer. Mg(2+) serves as cofactor.

It localises to the cytoplasm. The catalysed reaction is alpha-D-glucosamine 1-phosphate + acetyl-CoA = N-acetyl-alpha-D-glucosamine 1-phosphate + CoA + H(+). The enzyme catalyses N-acetyl-alpha-D-glucosamine 1-phosphate + UTP + H(+) = UDP-N-acetyl-alpha-D-glucosamine + diphosphate. Its pathway is nucleotide-sugar biosynthesis; UDP-N-acetyl-alpha-D-glucosamine biosynthesis; N-acetyl-alpha-D-glucosamine 1-phosphate from alpha-D-glucosamine 6-phosphate (route II): step 2/2. The protein operates within nucleotide-sugar biosynthesis; UDP-N-acetyl-alpha-D-glucosamine biosynthesis; UDP-N-acetyl-alpha-D-glucosamine from N-acetyl-alpha-D-glucosamine 1-phosphate: step 1/1. It participates in bacterial outer membrane biogenesis; LPS lipid A biosynthesis. Its function is as follows. Catalyzes the last two sequential reactions in the de novo biosynthetic pathway for UDP-N-acetylglucosamine (UDP-GlcNAc). The C-terminal domain catalyzes the transfer of acetyl group from acetyl coenzyme A to glucosamine-1-phosphate (GlcN-1-P) to produce N-acetylglucosamine-1-phosphate (GlcNAc-1-P), which is converted into UDP-GlcNAc by the transfer of uridine 5-monophosphate (from uridine 5-triphosphate), a reaction catalyzed by the N-terminal domain. This is Bifunctional protein GlmU from Vesicomyosocius okutanii subsp. Calyptogena okutanii (strain HA).